The primary structure comprises 392 residues: MAENNVYGHEMKKHFMLDPDYVNVNNGSCGTESLAVYNKHVQLLKEAQSKPDFMCNAYMPMYMEATRNEVAKLIGADSSNIVFCNSATDGISTVLLTFPWEQNDEILMLNVAYPTCTYAADFAKNQHNLRLDVIDVGVEIDEDLFLKEVEQRFLQSKPRAFICDILSSMPVILFPWEKVVKLCKKYNIVSIIDGAHAIGHIPMNLANVDPDFLFTNAHKWLNSPAACTVLYVSAKNHNLIEALPLSYGYGLREKESIAVDTLTNRFVNSFKQDLPKFIAVGEAIKFRKSIGGEEKIQQYCHEIALKGAEIISKELGTSFIKPPYPVAMVNVEVPLRNIPSIETQKVFWPKYNTFLRFMEFKGKFYTRLSGAVYLEESDFYYIAKVIKDFCSL.

An N6-(pyridoxal phosphate)lysine modification is found at lysine 219.

Belongs to the class-V pyridoxal-phosphate-dependent aminotransferase family. EgtE subfamily. The cofactor is pyridoxal 5'-phosphate.

The protein resides in the cytoplasm. It localises to the nucleus. It carries out the reaction S-(hercyn-2-yl)-L-cysteine S-oxide + AH2 + H(+) = ergothioneine + pyruvate + A + NH4(+). It participates in amino-acid biosynthesis; ergothioneine biosynthesis. Its function is as follows. Catalyzes the conversion of hercynylcysteine sulfoxide to ergothioneine by cleaving the cysteine residue at the sulfur atom, the last step in the biosynthesis pathway of ergothioneine. The chain is Hercynylcysteine sulfoxide lyase from Schizosaccharomyces pombe (strain 972 / ATCC 24843) (Fission yeast).